The sequence spans 317 residues: Protoheme IX farnesyltransferase (317 aa).

The next 8 helical transmembrane spans lie at 39-59, 60-80, 109-129, 131-151, 160-180, 184-204, 249-269, and 297-317; these read VLYL…GGIN, PILG…AGAI, GALA…WLAT, LLAA…YTMW, IVIG…AATG, LLPV…FWAL, VLHL…LAFV, and FKFS…DHLV.

Belongs to the UbiA prenyltransferase family. Protoheme IX farnesyltransferase subfamily.

It localises to the cell inner membrane. The catalysed reaction is heme b + (2E,6E)-farnesyl diphosphate + H2O = Fe(II)-heme o + diphosphate. It functions in the pathway porphyrin-containing compound metabolism; heme O biosynthesis; heme O from protoheme: step 1/1. Functionally, converts heme B (protoheme IX) to heme O by substitution of the vinyl group on carbon 2 of heme B porphyrin ring with a hydroxyethyl farnesyl side group. The polypeptide is Protoheme IX farnesyltransferase (Acidiphilium cryptum (strain JF-5)).